The sequence spans 206 residues: Peroxynitrite isomerase (206 aa).

The GXWXGXG signature appears at 21 to 27; that stretch reads GTWEGNG. Histidine 190 is a heme b binding site.

It belongs to the nitrobindin family. As to quaternary structure, homodimer. The cofactor is heme b.

It carries out the reaction peroxynitrite = nitrate. It participates in nitrogen metabolism. Functionally, heme-binding protein able to scavenge peroxynitrite and to protect free L-tyrosine against peroxynitrite-mediated nitration, by acting as a peroxynitrite isomerase that converts peroxynitrite to nitrate. Therefore, this protein likely plays a role in peroxynitrite sensing and in the detoxification of reactive nitrogen and oxygen species (RNS and ROS, respectively). Is able to bind nitric oxide (NO) in vitro, but may act as a sensor of peroxynitrite levels in vivo. The protein is Peroxynitrite isomerase of Kocuria rhizophila (strain ATCC 9341 / DSM 348 / NBRC 103217 / DC2201).